An 873-amino-acid chain; its full sequence is Zinc fingers and homeoboxes protein 1 (873 aa).

Residues 24 to 63 (LISDLDEGPPVLTPVENTRAESISSDEEVHESVDSDNQQN) are disordered. Thr36 carries the phosphothreonine modification. A phosphoserine mark is found at Ser45, Ser47, and Ser48. 2 consecutive C2H2-type zinc fingers follow at residues 70-93 (YECKYCTFQTPDLNMFTFHVDSEH) and 102-125 (YVCVECNFLTKRYDALSEHNLKYH). A Glycyl lysine isopeptide (Lys-Gly) (interchain with G-Cter in SUMO2) cross-link involves residue Lys159. The segment at 198-236 (VHHNSVEDVPEEKENEIKPDREETVENPSSSASESNTST) is disordered. Ser202 carries the post-translational modification Phosphoserine. A compositionally biased stretch (basic and acidic residues) spans 212–221 (NEIKPDREET). The segment covering 223-236 (ENPSSSASESNTST) has biased composition (low complexity). A required for dimerization region spans residues 272–432 (NSNLIPKVLI…QNNVQKSQVP (161 aa)). Residues 272–564 (NSNLIPKVLI…VQPKQSWNPF (293 aa)) are required for interaction with NFYA. The homeobox 1 DNA-binding region spans 284 to 346 (NSIPTYNAAL…LKHGVSWTPE (63 aa)). A disordered region spans residues 431–454 (VPAAQPTAETKPATAAVPTSQSVK). Residues Lys441, Lys454, and Lys485 each participate in a glycyl lysine isopeptide (Lys-Gly) (interchain with G-Cter in SUMO2) cross-link. The segment at residues 464–526 (SFGIRAKKTK…YNQRNSKSNQ (63 aa)) is a DNA-binding region (homeobox 2). Disordered regions lie at residues 544–563 (DETTESPTVGTVQPKQSWNP), 626–668 (KEEK…CKKT), and 732–769 (SSMNGLSSLRKRGRGRPKGRGRGRPRGRPRGSKRINNW). A compositionally biased stretch (polar residues) spans 550-562 (PTVGTVQPKQSWN). A DNA-binding region (homeobox 3) is located at residues 569 to 630 (PQKFKEKTAE…KSKALKEEKM (62 aa)). A Glycyl lysine isopeptide (Lys-Gly) (interchain with G-Cter in SUMO2) cross-link involves residue Lys629. Ser648 carries the post-translational modification Phosphoserine. The homeobox 4 DNA-binding region spans 660-722 (STGKICKKTP…YAWKNGNLKW (63 aa)). The tract at residues 734–768 (MNGLSSLRKRGRGRPKGRGRGRPRGRPRGSKRINN) is required for nuclear localization. Residues 740–764 (LRKRGRGRPKGRGRGRPRGRPRGSK) are compositionally biased toward basic residues. A Phosphoserine modification is found at Ser774. The homeobox 5 DNA-binding region spans 777–832 (KFKTGTAILKDYYLKHKFLNEQDLDELVNKSHMGYEQVREWFAERQRRSELGIELF). Positions 829-873 (IELFEENEEEDEVIDDQEEDEEETDDSDTWEPPRHVKRKLSKSDD) are disordered. Over residues 831–857 (LFEENEEEDEVIDDQEEDEEETDDSDT) the composition is skewed to acidic residues. The segment at 831–873 (LFEENEEEDEVIDDQEEDEEETDDSDTWEPPRHVKRKLSKSDD) is required for repressor activity. The span at 863 to 873 (HVKRKLSKSDD) shows a compositional bias: basic residues.

It belongs to the ZHX family. Forms homodimers. Heterodimer (via HD1 domain) with ZHX2 (via HD1 domain). Also forms a heterodimer with ZHX3 which is a prerequisite for repressor activity. Interacts with ATF7IP and NFYA. Interacts (via homeobox domains) with DNMT3B (via PWWP domain).

It is found in the nucleus. Functionally, acts as a transcriptional repressor. Increases DNMT3B-mediated repressive transcriptional activity when DNMT3B is tethered to DNA. May link molecule between DNMT3B and other co-repressor proteins. In Pongo pygmaeus (Bornean orangutan), this protein is Zinc fingers and homeoboxes protein 1 (ZHX1).